The primary structure comprises 328 residues: Arabinose 5-phosphate isomerase KdsD (328 aa).

The SIS domain maps to 41–184 (ACEKMFNCTG…AVALLKARGF (144 aa)). Residues 75–76 (GT), His-82, His-88, 114–123 (ALIPVLKRLH), and 148–150 (KVP) each bind substrate. His-82 contacts Zn(2+). One can recognise a CBS 1 domain in the interval 210 to 268 (MHTGDEIPHVNKHATLRDALLEITRKNLGMTVICDESMKIDGIFTDGDLRRVFDMGGDM). Glu-275 serves as a coordination point for substrate. In terms of domain architecture, CBS 2 spans 277-328 (MTPGGIRVRPGILAVDALNLMQSRHITSVLVADGDQLLGVLHMHDLLRAGVV).

Belongs to the SIS family. GutQ/KpsF subfamily. Homotetramer.

The catalysed reaction is D-arabinose 5-phosphate = D-ribulose 5-phosphate. The protein operates within carbohydrate biosynthesis; 3-deoxy-D-manno-octulosonate biosynthesis; 3-deoxy-D-manno-octulosonate from D-ribulose 5-phosphate: step 1/3. It functions in the pathway bacterial outer membrane biogenesis; lipopolysaccharide biosynthesis. Its function is as follows. Involved in the biosynthesis of 3-deoxy-D-manno-octulosonate (KDO), a unique 8-carbon sugar component of lipopolysaccharides (LPSs). Catalyzes the reversible aldol-ketol isomerization between D-ribulose 5-phosphate (Ru5P) and D-arabinose 5-phosphate (A5P). This chain is Arabinose 5-phosphate isomerase KdsD (kdsD), found in Salmonella typhimurium (strain LT2 / SGSC1412 / ATCC 700720).